A 248-amino-acid chain; its full sequence is Probable transcriptional regulatory protein Mrad2831_3553 (248 aa).

It belongs to the TACO1 family.

Its subcellular location is the cytoplasm. This is Probable transcriptional regulatory protein Mrad2831_3553 from Methylobacterium radiotolerans (strain ATCC 27329 / DSM 1819 / JCM 2831 / NBRC 15690 / NCIMB 10815 / 0-1).